Consider the following 249-residue polypeptide: Protein-lysine 6-oxidase (249 aa).

Y19 carries the sulfotyrosine modification. A lysyl-oxidase like region spans residues 45–249 (PDLVPDPYYI…YASGCTISPY (205 aa)). 5 disulfides stabilise this stretch: C70/C76, C123/C172, C156/C162, C183/C193, and C230/C244. Residues H124, H126, and H128 each contribute to the Cu cation site. The segment at residues 152–187 (KASFCLEDTSCDYGYHRRFACTAHTQGLSPGCYDTY) is a cross-link (lysine tyrosylquinone (Lys-Tyr)). Y187 is modified (2',4',5'-topaquinone).

This sequence belongs to the lysyl oxidase family. Interacts with MFAP4. Interacts (via propeptide) with EFEMP2; this interaction is strong and facilitates formation of ternary complexes with ELN during elastic fiber assembly; this interaction limits interaction of EFEMP2 with FBLN5. Requires Cu cation as cofactor. Lysine tyrosylquinone residue is required as a cofactor. In terms of processing, the lysine tyrosylquinone cross-link (LTQ) is generated by condensation of the epsilon-amino group of a lysine with a topaquinone produced by oxidation of tyrosine. Post-translationally, proteolytically cleaved by BMP1 which removes the propeptide. Also proteolytically cleaved by ADAMTS2 and ADAMTS14, but not by ADAMTS3, at an additional cleavage site downstream of the BMP1 cleavage site. The propeptide plays a role in directing the deposition of this enzyme to elastic fibers, via interaction with tropoelastin. Cleavage by BMP1 to remove the propeptide does not increase enzymatic activity but increases binding to collagen. Cleavage by ADAMTS2 produces a form with reduced collagen-binding activity. Sulfated at Tyr-19 and also at either Tyr-15 or Tyr-16 which enhances binding to collagen.

It localises to the secreted. Its subcellular location is the extracellular space. The enzyme catalyses L-lysyl-[protein] + O2 + H2O = (S)-2-amino-6-oxohexanoyl-[protein] + H2O2 + NH4(+). Responsible for the post-translational oxidative deamination of peptidyl lysine residues in precursors to fibrous collagen and elastin. Regulator of Ras expression. May play a role in tumor suppression. Plays a role in the aortic wall architecture. The polypeptide is Protein-lysine 6-oxidase (Sus scrofa (Pig)).